Reading from the N-terminus, the 506-residue chain is DEAD-box ATP-dependent RNA helicase CshA (506 aa).

The Q motif motif lies at 2-30 (QNFKELGISDNTVQSLESMGFKEPTPIQK). Residues 33 to 203 (IPYALQGIDI…QQFMKSPKII (171 aa)) form the Helicase ATP-binding domain. 46-53 (AQTGTGKT) contributes to the ATP binding site. The short motif at 150-153 (DEAD) is the DEAD box element. In terms of domain architecture, Helicase C-terminal spans 214-375 (QIEEFYTIVK…LRPPHRKEVL (162 aa)). Residues 436–506 (EKPLSRKGRN…KGRTFADHQK (71 aa)) form a disordered region. Over residues 468 to 480 (KRSKGYSSKKKST) the composition is skewed to basic residues.

This sequence belongs to the DEAD box helicase family. CshA subfamily. As to quaternary structure, oligomerizes, may be a member of the RNA degradosome.

It localises to the cytoplasm. It catalyses the reaction ATP + H2O = ADP + phosphate + H(+). DEAD-box RNA helicase possibly involved in RNA degradation. Unwinds dsRNA in both 5'- and 3'-directions, has RNA-dependent ATPase activity. The sequence is that of DEAD-box ATP-dependent RNA helicase CshA from Staphylococcus aureus (strain MRSA252).